The primary structure comprises 509 residues: Bifunctional purine biosynthesis protein PurH (509 aa).

The region spanning 1-144 (MKRALLSVSD…KNARDVIVVV (144 aa)) is the MGS-like domain.

The protein belongs to the PurH family.

The catalysed reaction is (6R)-10-formyltetrahydrofolate + 5-amino-1-(5-phospho-beta-D-ribosyl)imidazole-4-carboxamide = 5-formamido-1-(5-phospho-D-ribosyl)imidazole-4-carboxamide + (6S)-5,6,7,8-tetrahydrofolate. It catalyses the reaction IMP + H2O = 5-formamido-1-(5-phospho-D-ribosyl)imidazole-4-carboxamide. It functions in the pathway purine metabolism; IMP biosynthesis via de novo pathway; 5-formamido-1-(5-phospho-D-ribosyl)imidazole-4-carboxamide from 5-amino-1-(5-phospho-D-ribosyl)imidazole-4-carboxamide (10-formyl THF route): step 1/1. Its pathway is purine metabolism; IMP biosynthesis via de novo pathway; IMP from 5-formamido-1-(5-phospho-D-ribosyl)imidazole-4-carboxamide: step 1/1. The protein is Bifunctional purine biosynthesis protein PurH of Oenococcus oeni (strain ATCC BAA-331 / PSU-1).